Consider the following 309-residue polypeptide: Probable ABC transporter permease protein y4oQ (309 aa).

Helical transmembrane passes span 25–45 (VVWF…VPLV), 89–109 (LIYA…FAVL), 123–143 (LMLI…KLLY), 174–194 (VIIV…LAGL), 221–241 (LPHL…GVMA), 246–266 (IFLL…VYAY), and 278–298 (TTAI…PLIW). Residues 85-296 (IRVTLIYAVV…VFVLAISAPL (212 aa)) enclose the ABC transmembrane type-1 domain.

This sequence belongs to the binding-protein-dependent transport system permease family. MalFG subfamily.

The protein localises to the cell inner membrane. Probably part of the binding-protein-dependent transport system y4oPQRS. This system probably transports a sugar-like molecule. Probably responsible for the translocation of the substrate across the membrane. This is Probable ABC transporter permease protein y4oQ from Sinorhizobium fredii (strain NBRC 101917 / NGR234).